Consider the following 925-residue polypeptide: Bifunctional glutamine synthetase adenylyltransferase/adenylyl-removing enzyme (925 aa).

The tract at residues 1 to 426 (MTDASDLLSL…AQFDQVFADK (426 aa)) is adenylyl removase. The tract at residues 436–925 (DQAAGCIWSG…AALWARVFGA (490 aa)) is adenylyl transferase.

It belongs to the GlnE family. Requires Mg(2+) as cofactor.

The enzyme catalyses [glutamine synthetase]-O(4)-(5'-adenylyl)-L-tyrosine + phosphate = [glutamine synthetase]-L-tyrosine + ADP. It catalyses the reaction [glutamine synthetase]-L-tyrosine + ATP = [glutamine synthetase]-O(4)-(5'-adenylyl)-L-tyrosine + diphosphate. Functionally, involved in the regulation of glutamine synthetase GlnA, a key enzyme in the process to assimilate ammonia. When cellular nitrogen levels are high, the C-terminal adenylyl transferase (AT) inactivates GlnA by covalent transfer of an adenylyl group from ATP to specific tyrosine residue of GlnA, thus reducing its activity. Conversely, when nitrogen levels are low, the N-terminal adenylyl removase (AR) activates GlnA by removing the adenylyl group by phosphorolysis, increasing its activity. The regulatory region of GlnE binds the signal transduction protein PII (GlnB) which indicates the nitrogen status of the cell. The protein is Bifunctional glutamine synthetase adenylyltransferase/adenylyl-removing enzyme of Burkholderia mallei (strain ATCC 23344).